Here is a 421-residue protein sequence, read N- to C-terminus: Indole-3-pyruvate monooxygenase YUCCA8 (421 aa).

An FAD-binding site is contributed by 30–35 (GAGPSG). 201-206 (GCGNSG) is an NADP(+) binding site.

The protein belongs to the FMO family. The cofactor is FAD. Expressed in organs undergoing active growth and cell division.

It is found in the endoplasmic reticulum. The enzyme catalyses indole-3-pyruvate + NADPH + O2 + H(+) = (indol-3-yl)acetate + CO2 + NADP(+) + H2O. Functionally, involved in auxin biosynthesis. Converts the indole-3-pyruvic acid (IPA) produced by the TAA family to indole-3-acetic acid (IAA). Seems not able to use tryptamine (TAM) as substrate. Probably responsible for auxin biosynthesis in leaves and involved in the regulation of lateral leaf growth. Required for maintaining water homeostasis and an appropriate root to shoot ratio. Required for the inhibition of root growth by ethylene in etiolated seedlings. Functions downstream of the ethylene-response transcription factor EIL1. The protein is Indole-3-pyruvate monooxygenase YUCCA8 of Oryza sativa subsp. indica (Rice).